The chain runs to 341 residues: Heat-inducible transcription repressor HrcA (341 aa).

This sequence belongs to the HrcA family.

Its function is as follows. Negative regulator of class I heat shock genes (grpE-dnaK-dnaJ and groELS operons). Prevents heat-shock induction of these operons. In Corynebacterium jeikeium (strain K411), this protein is Heat-inducible transcription repressor HrcA.